A 966-amino-acid polypeptide reads, in one-letter code: MDAGARYMRLTGKENWVEVTMDGEKERKREGFTAGQQGKYNPQVSKNIGNRNTNDCFAYKGIFLWRISLTMWILLGINMCVSAEDYITLISDPYGFSPIKNVSGVPVTCVTKEFAKWGCQPLGAYPDPEIEYRNVSQEVVKEVYQENWPWNTYHWPLWQMENVRYWLKENMQENQQRKNNTKEGIEELLAGTIRGRFCVPYPFALLKCTKWCWYTAAINNESGKAGKIKINCTEARAVSCTEDMPLASIQRAYWDEKDRESMAFMNIKACDSNLRCQKRPGGCMEGYPIPVGAEIIPESMKYLRGAKSQYGGIKDKNGELKLPLTLRVWVKLANVSEWVNGTPPDWQDRINGSKGINGTLWGELNSMHHLGFALSQNGKWCNYTGEIKLGQETFQYHYKPNWNCTGNWTQYPVWQVIRNLDMVEHMTGECVQRPQRHNITVGNGTITGNCSTTNWDGCNCSRSGNYLYNSSEGGLLLILCRQNSTLTRILGTNTNWTTMWGIYKNCSGCENATLDNTGEGTLGGVANKNCSLPHKNESNKWTCAPRQRDGKTDSLYIAGGKKFWTRIKAQFSCESNIGQLDGMLHQQILLQKYQVIKVRAYTYGVIEMPENYAKTRIINRKKRELSHKRKKRGVGLVIMLVIMAIVAAAGASLGVANAIQQSYTKAAVQTLANATAAQQDVLEATYAMVQHVAKGVRILEARVARVEAITDRIMLYQELDCWHYHQYCITSTKTEVAKYINWTRFKDNCTWQQWERGLQGYDTNLTILLKESAAMTQLAEEQARRIPEVWESLKDVFDWSGWFSWLKYIPIIVVGLLGCILIRAVICVCQPLVEIYRTLSTPTYQRVTVIMETRADVAGENQDFGDGLEESDNSETSERVTVQKAWSRAWELWQNSPWKEPWKRGLLRLLVLPLTMGIWINGWLGEHHKNKKRKGGLETWHKKGTDIGLGQIPVDHLWCYKKSKSL.

Residues 1-83 (MDAGARYMRL…LLGINMCVSA (83 aa)) form the signal peptide. Residues 84–801 (EDYITLISDP…SLKDVFDWSG (718 aa)) lie on the Extracellular side of the membrane. N-linked (GlcNAc...) asparagine; by host glycans are attached at residues Asn101, Asn134, Asn179, Asn220, Asn231, Asn334, Asn351, Asn357, Asn382, Asn403, Asn407, Asn438, Asn443, Asn449, Asn459, Asn469, Asn483, Asn495, Asn505, Asn511, Asn529, and Asn536. The fusion peptide stretch occupies residues 633–653 (GVGLVIMLVIMAIVAAAGASL). 2 coiled-coil regions span residues 665-715 (KAAV…RIML) and 756-791 (RGLQ…EVWE). An immunosuppression region spans residues 699–715 (LEARVARVEAITDRIML). The helical transmembrane segment at 802-822 (WFSWLKYIPIIVVGLLGCILI) threads the bilayer. Residues 823–966 (RAVICVCQPL…LWCYKKSKSL (144 aa)) lie on the Cytoplasmic side of the membrane.

In terms of assembly, the mature envelope protein (Env) consists of a trimer of SU-TM heterodimers attached by noncovalent interactions or by a labile interchain disulfide bond. Specific enzymatic cleavages in vivo yield mature proteins. Envelope glycoproteins are synthesized as an inactive precursor that is N-glycosylated and processed likely by host cell furin or by a furin-like protease in the Golgi to yield the mature SU and TM proteins. The cleavage site between SU and TM requires the minimal sequence [KR]-X-[KR]-R.

It localises to the virion membrane. Its subcellular location is the host cell membrane. Its function is as follows. The surface protein (SU) attaches the virus to the host cell by binding to its receptor. This interaction triggers the refolding of the transmembrane protein (TM) and is thought to activate its fusogenic potential by unmasking its fusion peptide. Fusion occurs at the host cell plasma membrane. In terms of biological role, the transmembrane protein (TM) acts as a class I viral fusion protein. Under the current model, the protein has at least 3 conformational states: pre-fusion native state, pre-hairpin intermediate state, and post-fusion hairpin state. During viral and target cell membrane fusion, the coiled coil regions (heptad repeats) assume a trimer-of-hairpins structure, positioning the fusion peptide in close proximity to the C-terminal region of the ectodomain. The formation of this structure appears to drive apposition and subsequent fusion of viral and target cell membranes. Membranes fusion leads to delivery of the nucleocapsid into the cytoplasm. This chain is Envelope glycoprotein (env), found in Caprine arthritis encephalitis virus (strain Cork) (CAEV-Co).